Here is a 61-residue protein sequence, read N- to C-terminus: Small ribosomal subunit protein uS14 (61 aa).

Cys-24, Cys-27, Cys-40, and Cys-43 together coordinate Zn(2+).

This sequence belongs to the universal ribosomal protein uS14 family. Zinc-binding uS14 subfamily. In terms of assembly, part of the 30S ribosomal subunit. Contacts proteins S3 and S10. Zn(2+) is required as a cofactor.

Binds 16S rRNA, required for the assembly of 30S particles and may also be responsible for determining the conformation of the 16S rRNA at the A site. The chain is Small ribosomal subunit protein uS14 from Clostridioides difficile (strain 630) (Peptoclostridium difficile).